The following is a 520-amino-acid chain: GMP synthase [glutamine-hydrolyzing] (520 aa).

Residues 9 to 202 (TILIIDFGSQ…VHRIVGVKPG (194 aa)) enclose the Glutamine amidotransferase type-1 domain. C86 functions as the Nucleophile in the catalytic mechanism. Active-site residues include H176 and E178. Residues 203–395 (WTMGAYREQA…LGLPDSFIGR (193 aa)) form the GMPS ATP-PPase domain. 230-236 (SGGVDSS) is a binding site for ATP.

As to quaternary structure, homodimer.

The enzyme catalyses XMP + L-glutamine + ATP + H2O = GMP + L-glutamate + AMP + diphosphate + 2 H(+). Its pathway is purine metabolism; GMP biosynthesis; GMP from XMP (L-Gln route): step 1/1. Its function is as follows. Catalyzes the synthesis of GMP from XMP. This Brucella ovis (strain ATCC 25840 / 63/290 / NCTC 10512) protein is GMP synthase [glutamine-hydrolyzing].